The sequence spans 185 residues: Ribosome-recycling factor (185 aa).

Belongs to the RRF family.

It is found in the cytoplasm. In terms of biological role, responsible for the release of ribosomes from messenger RNA at the termination of protein biosynthesis. May increase the efficiency of translation by recycling ribosomes from one round of translation to another. In Mycolicibacterium vanbaalenii (strain DSM 7251 / JCM 13017 / BCRC 16820 / KCTC 9966 / NRRL B-24157 / PYR-1) (Mycobacterium vanbaalenii), this protein is Ribosome-recycling factor.